A 355-amino-acid chain; its full sequence is UDP-3-O-acylglucosamine N-acyltransferase (355 aa).

His258 serves as the catalytic Proton acceptor.

It belongs to the transferase hexapeptide repeat family. LpxD subfamily. As to quaternary structure, homotrimer.

The catalysed reaction is a UDP-3-O-[(3R)-3-hydroxyacyl]-alpha-D-glucosamine + a (3R)-hydroxyacyl-[ACP] = a UDP-2-N,3-O-bis[(3R)-3-hydroxyacyl]-alpha-D-glucosamine + holo-[ACP] + H(+). The protein operates within bacterial outer membrane biogenesis; LPS lipid A biosynthesis. In terms of biological role, catalyzes the N-acylation of UDP-3-O-acylglucosamine using 3-hydroxyacyl-ACP as the acyl donor. Is involved in the biosynthesis of lipid A, a phosphorylated glycolipid that anchors the lipopolysaccharide to the outer membrane of the cell. In Bradyrhizobium sp. (strain BTAi1 / ATCC BAA-1182), this protein is UDP-3-O-acylglucosamine N-acyltransferase.